The chain runs to 268 residues: Undecaprenyl-diphosphatase (268 aa).

Transmembrane regions (helical) follow at residues 5–25 (TIAQ…IPVS), 43–63 (GKAF…SVYA), 84–104 (LGIL…YQII), 107–127 (VLFE…IVLL), 184–204 (AAEF…AYDL), 214–234 (ADLQ…VLVV), and 247–267 (ALFG…VLVL).

It belongs to the UppP family.

It is found in the cell inner membrane. The catalysed reaction is di-trans,octa-cis-undecaprenyl diphosphate + H2O = di-trans,octa-cis-undecaprenyl phosphate + phosphate + H(+). In terms of biological role, catalyzes the dephosphorylation of undecaprenyl diphosphate (UPP). Confers resistance to bacitracin. In Chelativorans sp. (strain BNC1), this protein is Undecaprenyl-diphosphatase.